A 209-amino-acid chain; its full sequence is Octanoyltransferase (209 aa).

The BPL/LPL catalytic domain maps to 29-209; the sequence is GSGDELVWML…KKSFVKIFGE (181 aa). Residues 68–75, 141–143, and 154–156 each bind substrate; these read RGGKYTYH, AIG, and GIA. Catalysis depends on Cys172, which acts as the Acyl-thioester intermediate.

This sequence belongs to the LipB family.

The protein localises to the cytoplasm. The enzyme catalyses octanoyl-[ACP] + L-lysyl-[protein] = N(6)-octanoyl-L-lysyl-[protein] + holo-[ACP] + H(+). It participates in protein modification; protein lipoylation via endogenous pathway; protein N(6)-(lipoyl)lysine from octanoyl-[acyl-carrier-protein]: step 1/2. Functionally, catalyzes the transfer of endogenously produced octanoic acid from octanoyl-acyl-carrier-protein onto the lipoyl domains of lipoate-dependent enzymes. Lipoyl-ACP can also act as a substrate although octanoyl-ACP is likely to be the physiological substrate. The polypeptide is Octanoyltransferase (Neorickettsia sennetsu (strain ATCC VR-367 / Miyayama) (Ehrlichia sennetsu)).